A 1185-amino-acid polypeptide reads, in one-letter code: AT-rich interactive domain-containing protein 5B (1185 aa).

Disordered regions lie at residues 248 to 281 (PNLK…ESKA), 413 to 550 (KGEE…PDED), 713 to 742 (ISKK…PIAI), 883 to 932 (HQQE…EGKG), and 1033 to 1058 (HLPK…LHGL). Residues 252–261 (GRPRKKKPCP) show a composition bias toward basic residues. Positions 321-413 (RADEQAFLVA…LILPYERFIK (93 aa)) constitute an ARID domain. Residues 447–461 (IKNENQKSKKEKDNA) show a composition bias toward basic and acidic residues. Positions 462 to 471 (QKPQDASEVS) are enriched in polar residues. Positions 473–487 (EQEKDQESADQKNFT) are enriched in basic and acidic residues. A compositionally biased stretch (basic and acidic residues) spans 1034–1053 (LPKETSVKEKVPDAEGEGSK).

Belongs to the ARID5B family.

Its subcellular location is the nucleus. Transcription coactivator that binds to the 5'-AATA[CT]-3' core sequence and plays a key role in adipogenesis and liver development. Required for adipogenesis: regulates triglyceride metabolism in adipocytes by regulating expression of adipogenic genes. The chain is AT-rich interactive domain-containing protein 5B (ARID5B) from Gallus gallus (Chicken).